Here is a 107-residue protein sequence, read N- to C-terminus: ADIVMTQTPASVSEPVGGTVTIKCQTSQSIDDYLSWYQQKPGQPPKGLIYRASTLASGVPSRFRGSGSGTDFTLTISDLECADAATYYCQSTYGVGFGGGTEVVVKG.

Residues 1 to 24 (ADIVMTQTPASVSEPVGGTVTIKC) are framework-1. The complementarity-determining-1 stretch occupies residues 25 to 35 (QTSQSIDDYLS). Residues 36-50 (WYQQKPGQPPKGLIY) form a framework-2 region. A complementarity-determining-2 region spans residues 51–57 (RASTLAS). Residues 58-89 (GVPSRFRGSGSGTDFTLTISDLECADAATYYC) form a framework-3 region. The tract at residues 90-96 (QSTYGVG) is complementarity-determining-3. Residues 97 to 106 (FGGGTEVVVK) form a framework-4 region.

The protein is Ig kappa chain V region 4135 of Oryctolagus cuniculus (Rabbit).